A 745-amino-acid polypeptide reads, in one-letter code: Single-minded homolog 1-A (745 aa).

In terms of domain architecture, bHLH spans 1–53 (MKEKSKNAGRTRREKENSEFYELAKLLPLPSAITSQSDKASIIRLTTSYLKMR). 2 consecutive PAS domains span residues 77 to 147 (GREL…QPYH) and 218 to 288 (PPSA…LVKG). The region spanning 336–745 (EYKGLQLSLD…GTSVIITNGS (410 aa)) is the Single-minded C-terminal domain. The segment covering 350-364 (TKPSFTYNSPSNPVT) has biased composition (polar residues). 2 disordered regions span residues 350–413 (TKPS…LTDS) and 529–563 (EDSA…EPSK). Positions 368 to 387 (RVGKSRVSRTKTKTRLSPYS) match the Nuclear localization signal motif. Residues 369-381 (VGKSRVSRTKTKT) show a composition bias toward basic residues. A compositionally biased stretch (low complexity) spans 532-544 (AVSSAPDGGSASD).

In terms of assembly, efficient DNA binding requires dimerization with another bHLH protein. Heterodimer of sim1a and arnt. As to expression, expressed in embryonic forebrain at the eleven somite stage. Detected in brain throughout embryonic development.

It is found in the nucleus. Functionally, transcriptional factor that may have pleiotropic effects during embryogenesis and in the adult. The protein is Single-minded homolog 1-A (sim1a) of Danio rerio (Zebrafish).